The chain runs to 563 residues: MSSNLLPTLNSGGKVKDGSTKEDRPYKIFFRDLFLVKENEMAAKETEKFMNRNMKVYQKTTFSSRMKSHSYLSQLAFYPKRSGRSFEKFGPGPAPIPRLIEGSDTKRTVHEFINDQRDRFLLEYALSTKRNTIKKFEKDIAMRERQLKKAEKKLQDDALAFEEFLRENDQRSVDALKMAAQETINKLQMTAELKKASMEVQAVKSEIAKTEFLLREYMKYGFFLLQMSPKHWQIQQALKRAQASKSKANIILPKILAKLSLHSSNKEGILEESGRTAVLSEDASQGRDSQGKPSRSLTRTPEKKKSNLAESFGSEDSLEFLLDDEMDVDLEPALYFKEPEELLQVLRELEEQNLTLFQYSQDVDENLEEVNKREKVIQDKTNSNIEFLLEQEKMLKANCVREEEKAAELQLKSKLFSFGEFNSDAQEILIDSLSKKITQVYKVCIGDAEDDGLNPIQKLVKVESRLVELCDLIESIPKENVEAIERMKQKEWRQKFRDEKMKEKQRHQQERLKAALEKAVAQPKKKLGRRLVFHSKPPSGNKQQLPLVNETKTKSQEEEYFFT.

Residues 1-11 are compositionally biased toward polar residues; the sequence is MSSNLLPTLNS. The disordered stretch occupies residues 1 to 21; that stretch reads MSSNLLPTLNSGGKVKDGSTK. Residues 129–212 adopt a coiled-coil conformation; the sequence is KRNTIKKFEK…VKSEIAKTEF (84 aa). The tract at residues 272–311 is disordered; it reads ESGRTAVLSEDASQGRDSQGKPSRSLTRTPEKKKSNLAES. Residues 282–299 are compositionally biased toward polar residues; it reads DASQGRDSQGKPSRSLTR. Coiled coils occupy residues 384 to 415 and 497 to 522; these read NIEFLLEQEKMLKANCVREEEKAAELQLKSKL and RDEKMKEKQRHQQERLKAALEKAVAQ. Positions 522–563 are disordered; the sequence is QPKKKLGRRLVFHSKPPSGNKQQLPLVNETKTKSQEEEYFFT. Over residues 523 to 533 the composition is skewed to basic residues; sequence PKKKLGRRLVF.

Interacts with CCDC42, CFAP53, IFT88 and ODF2. Interacts with CCDC146. Interacts with TEKT3. Interacts with ubiquitinated histone H2A.

Its subcellular location is the cytoplasm. The protein localises to the cytoskeleton. It is found in the microtubule organizing center. It localises to the centrosome. The protein resides in the perinuclear region. Its subcellular location is the cell projection. The protein localises to the cilium. It is found in the flagellum. In terms of biological role, essential for male fertility. Required for sperm flagellum biogenesis. Also required for acrosome biogenesis. Required for the attachment of developing acrosomes to the nucleus during spermiogenesis and may be involved in the transport of fibrous sheath components. The polypeptide is Coiled-coil domain-containing protein 38 (CCDC38) (Homo sapiens (Human)).